The primary structure comprises 542 residues: uncharacterized protein (542 aa).

Topologically, residues 1-78 (MSVQKEEYDI…EEKKLVRKMD (78 aa)) are extracellular. Residues 79 to 99 (LKIFLWVFIMFAFLDLIRKNI) traverse the membrane as a helical segment. At 100–119 (ARAVSDNFIVDLKMNTNDYN) the chain is on the cytoplasmic side. A helical transmembrane segment spans residues 120–140 (LGQTVYLVIFLASELPGNLLS). Topologically, residues 141–147 (KRFGPER) are extracellular. The chain crosses the membrane as a helical span at residues 148–168 (VIPVQIVLWSVICITQAGLKN). The Cytoplasmic portion of the chain corresponds to 169–176 (RGQFIATR). A helical transmembrane segment spans residues 177–197 (CLLGMVQGGFIPDNILYLSYY). At 198–208 (YTGAELTFRLS) the chain is on the extracellular side. A helical membrane pass occupies residues 209–229 (FFWCAIPLFQILGSLLASGII). Over 230–241 (EMRGIHNLAGWQ) the chain is Cytoplasmic. Residues 242–262 (YLFIIEGFLSLSVGVASFYLM) form a helical membrane-spanning segment. Topologically, residues 263-326 (RRGPTQTGES…TLTEFDLWPL (64 aa)) are extracellular. The helical transmembrane segment at 327-347 (FIQGITAFISLQTVGSYLSLI) threads the bilayer. Topologically, residues 348 to 359 (LKSLNYSTFLSN) are cytoplasmic. Residues 360 to 380 (ILAIPGQALLLINLPLAALLS) form a helical membrane-spanning segment. Residues 381-387 (RKLKEKS) are Extracellular-facing. Residues 388–408 (LCVGIANVWVLPFIVSLVALP) traverse the membrane as a helical segment. The Cytoplasmic segment spans residues 409-416 (TDTNPWIK). The helical transmembrane segment at 417-437 (YILLTGILGLPYTHSILAGWV) threads the bilayer. Topologically, residues 438 to 482 (SEISNSVRSRTVGTALYNMSAQVGAIIASNMYRNDDKPYYTRGNK) are extracellular. Residues 483–503 (ILLGFTCFNICMAVATKFYYI) traverse the membrane as a helical segment. At 504–542 (SRNKYKDRKWNSMTKEEQINYLDTTKDKGMKRLDYRFIH) the chain is on the cytoplasmic side.

The protein belongs to the major facilitator superfamily. Allantoate permease family.

The protein localises to the membrane. This is an uncharacterized protein from Saccharomyces cerevisiae (strain ATCC 204508 / S288c) (Baker's yeast).